The sequence spans 278 residues: MDVRQSIHSAHAKTLDTQGLHNEFLVEKVFVADEYTMVYSHIDRIIVGGIMPITKTVSVGGEVGKQLGVSYFLERRELGVINIGGAGTITVDGQCYEIGHRDALYVGKGAKEVVFASIDTATPAKFYYNCAPAHTTYPTKKVTPDEVSPVTLGDNLTSNRRTINKYFVPDVLETCQLSMGLTELAPGNLWNTMPCHTHERRMEVYFYFNMDDDACVFHMMGQPQETRHIVMHNEQAVISPSWSIHSGVGTKAYTFIWGMVGENQVFDDMDHVAVKDLR.

Residues H196, H198, E203, and H245 each coordinate Zn(2+).

It belongs to the KduI family. It depends on Zn(2+) as a cofactor.

It catalyses the reaction 5-dehydro-4-deoxy-D-glucuronate = 3-deoxy-D-glycero-2,5-hexodiulosonate. It participates in glycan metabolism; pectin degradation; 2-dehydro-3-deoxy-D-gluconate from pectin: step 4/5. In terms of biological role, catalyzes the isomerization of 5-dehydro-4-deoxy-D-glucuronate to 3-deoxy-D-glycero-2,5-hexodiulosonate. The protein is 4-deoxy-L-threo-5-hexosulose-uronate ketol-isomerase of Shigella boydii serotype 4 (strain Sb227).